The sequence spans 633 residues: Biosynthetic arginine decarboxylase (633 aa).

Lys-101 carries the post-translational modification N6-(pyridoxal phosphate)lysine. Residue 284-294 (VDVGGGLGVDY) participates in substrate binding.

It belongs to the Orn/Lys/Arg decarboxylase class-II family. SpeA subfamily. Requires Mg(2+) as cofactor. It depends on pyridoxal 5'-phosphate as a cofactor.

The catalysed reaction is L-arginine + H(+) = agmatine + CO2. Its pathway is amine and polyamine biosynthesis; agmatine biosynthesis; agmatine from L-arginine: step 1/1. Its function is as follows. Catalyzes the biosynthesis of agmatine from arginine. The sequence is that of Biosynthetic arginine decarboxylase from Aeromonas salmonicida (strain A449).